We begin with the raw amino-acid sequence, 75 residues long: Acyl carrier protein (75 aa).

The region spanning 1–75 (MSVFDKVKSI…DAVNYIKENQ (75 aa)) is the Carrier domain. Position 35 is an O-(pantetheine 4'-phosphoryl)serine (Ser35).

The protein belongs to the acyl carrier protein (ACP) family. Post-translationally, 4'-phosphopantetheine is transferred from CoA to a specific serine of apo-ACP by AcpS. This modification is essential for activity because fatty acids are bound in thioester linkage to the sulfhydryl of the prosthetic group.

It localises to the cytoplasm. Its pathway is lipid metabolism; fatty acid biosynthesis. Carrier of the growing fatty acid chain in fatty acid biosynthesis. The sequence is that of Acyl carrier protein from Desulfitobacterium hafniense (strain Y51).